The chain runs to 124 residues: Holo-[acyl-carrier-protein] synthase (124 aa).

Residues Asp-8 and Glu-56 each coordinate Mg(2+).

Belongs to the P-Pant transferase superfamily. AcpS family. The cofactor is Mg(2+).

It localises to the cytoplasm. The enzyme catalyses apo-[ACP] + CoA = holo-[ACP] + adenosine 3',5'-bisphosphate + H(+). Functionally, transfers the 4'-phosphopantetheine moiety from coenzyme A to a Ser of acyl-carrier-protein. The protein is Holo-[acyl-carrier-protein] synthase of Clostridium acetobutylicum (strain ATCC 824 / DSM 792 / JCM 1419 / IAM 19013 / LMG 5710 / NBRC 13948 / NRRL B-527 / VKM B-1787 / 2291 / W).